Here is a 330-residue protein sequence, read N- to C-terminus: DNA-directed RNA polymerase subunit alpha (330 aa).

The alpha N-terminal domain (alpha-NTD) stretch occupies residues Met-1 to Arg-236. Positions Phe-250–Asp-330 are alpha C-terminal domain (alpha-CTD).

Belongs to the RNA polymerase alpha chain family. In terms of assembly, homodimer. The RNAP catalytic core consists of 2 alpha, 1 beta, 1 beta' and 1 omega subunit. When a sigma factor is associated with the core the holoenzyme is formed, which can initiate transcription.

The enzyme catalyses RNA(n) + a ribonucleoside 5'-triphosphate = RNA(n+1) + diphosphate. DNA-dependent RNA polymerase catalyzes the transcription of DNA into RNA using the four ribonucleoside triphosphates as substrates. This chain is DNA-directed RNA polymerase subunit alpha, found in Vibrio parahaemolyticus serotype O3:K6 (strain RIMD 2210633).